The sequence spans 401 residues: Chalcone synthase 6 (401 aa).

Cys-168 is an active-site residue.

Belongs to the thiolase-like superfamily. Chalcone/stilbene synthases family.

It carries out the reaction (E)-4-coumaroyl-CoA + 3 malonyl-CoA + 3 H(+) = 2',4,4',6'-tetrahydroxychalcone + 3 CO2 + 4 CoA. It participates in secondary metabolite biosynthesis; flavonoid biosynthesis. The primary product of this enzyme is 4,2',4',6'-tetrahydroxychalcone (also termed naringenin-chalcone or chalcone) which can under specific conditions spontaneously isomerize into naringenin. The sequence is that of Chalcone synthase 6 (CHS6) from Sorghum bicolor (Sorghum).